Reading from the N-terminus, the 228-residue chain is NAD(P)H-hydrate epimerase (228 aa).

The 201-residue stretch at 9–209 (VRAVERLAHR…LLGLTPAFLA (201 aa)) folds into the YjeF N-terminal domain. A (6S)-NADPHX-binding site is contributed by 53-57 (NNGGD). 2 residues coordinate K(+): Asn54 and Asp115. (6S)-NADPHX is bound by residues 119–125 (GIGLARP) and Asp148. K(+) is bound at residue Ser151.

Belongs to the NnrE/AIBP family. K(+) serves as cofactor.

It carries out the reaction (6R)-NADHX = (6S)-NADHX. It catalyses the reaction (6R)-NADPHX = (6S)-NADPHX. Functionally, catalyzes the epimerization of the S- and R-forms of NAD(P)HX, a damaged form of NAD(P)H that is a result of enzymatic or heat-dependent hydration. This is a prerequisite for the S-specific NAD(P)H-hydrate dehydratase to allow the repair of both epimers of NAD(P)HX. The protein is NAD(P)H-hydrate epimerase of Bordetella parapertussis (strain 12822 / ATCC BAA-587 / NCTC 13253).